A 244-amino-acid chain; its full sequence is 5-oxoprolinase subunit A (244 aa).

Belongs to the LamB/PxpA family. As to quaternary structure, forms a complex composed of PxpA, PxpB and PxpC.

The enzyme catalyses 5-oxo-L-proline + ATP + 2 H2O = L-glutamate + ADP + phosphate + H(+). Functionally, catalyzes the cleavage of 5-oxoproline to form L-glutamate coupled to the hydrolysis of ATP to ADP and inorganic phosphate. This is 5-oxoprolinase subunit A from Shigella dysenteriae serotype 1 (strain Sd197).